Reading from the N-terminus, the 77-residue chain is Small ribosomal subunit protein uS17 (77 aa).

The protein belongs to the universal ribosomal protein uS17 family. As to quaternary structure, part of the 30S ribosomal subunit.

In terms of biological role, one of the primary rRNA binding proteins, it binds specifically to the 5'-end of 16S ribosomal RNA. The polypeptide is Small ribosomal subunit protein uS17 (Rickettsia prowazekii (strain Madrid E)).